The sequence spans 59 residues: Large ribosomal subunit protein uL30 (59 aa).

The protein belongs to the universal ribosomal protein uL30 family. In terms of assembly, part of the 50S ribosomal subunit.

In Ectopseudomonas mendocina (strain ymp) (Pseudomonas mendocina), this protein is Large ribosomal subunit protein uL30.